We begin with the raw amino-acid sequence, 581 residues long: NADP-dependent malic enzyme 1 (581 aa).

Tyr129 functions as the Proton donor in the catalytic mechanism. Arg182 is a binding site for NADP(+). The Proton acceptor role is filled by Lys200. Glu272, Asp273, and Asp296 together coordinate a divalent metal cation. Residues Asp296, 325 to 341, and Asn437 contribute to the NADP(+) site; that span reads LFLGAGEAGTGIAELIA.

The protein belongs to the malic enzymes family. As to quaternary structure, homohexamers and homooctamers. The cofactor is Mg(2+). It depends on Mn(2+) as a cofactor. In terms of tissue distribution, specifically expressed in roots (only in steles of secondary roots).

Its subcellular location is the cytoplasm. The enzyme catalyses (S)-malate + NADP(+) = pyruvate + CO2 + NADPH. The catalysed reaction is oxaloacetate + H(+) = pyruvate + CO2. This chain is NADP-dependent malic enzyme 1 (NADP-ME1), found in Arabidopsis thaliana (Mouse-ear cress).